A 708-amino-acid chain; its full sequence is Homeobox-leucine zipper protein HDG10 (708 aa).

A disordered region spans residues 1 to 24 (MDSSHNDSSSDEEGIDSNNRRHHS). Residues 16–75 (DSNNRRHHSNHQVQRLEAFFHECPHPDDSQRRQLGNELNLKHKQIKFWFQNRRTQARIHN) constitute a DNA-binding region (homeobox). Positions 119 to 141 (LCNLQKLRTKNVILKTEYERLSS) form a coiled coil. Residues 162–188 (GPSTYGSTSNNRPASYGSSSNHLPQQS) are disordered. Over residues 165–188 (TYGSTSNNRPASYGSSSNHLPQQS) the composition is skewed to polar residues. The START domain occupies 218–456 (SQLEKNRMFE…LQRMCERLSL (239 aa)).

This sequence belongs to the HD-ZIP homeobox family. Class IV subfamily. Interacts with ANT, BBM and AIL1. Expressed in exclusively in anthers with highest levels in the tapetum and pollen grains.

It is found in the nucleus. Probable transcription factor. This chain is Homeobox-leucine zipper protein HDG10, found in Arabidopsis thaliana (Mouse-ear cress).